The chain runs to 251 residues: Hydroxyacylglutathione hydrolase (251 aa).

Zn(2+) is bound by residues H53, H55, D57, H58, H110, D127, and H165.

Belongs to the metallo-beta-lactamase superfamily. Glyoxalase II family. In terms of assembly, monomer. It depends on Zn(2+) as a cofactor.

The catalysed reaction is an S-(2-hydroxyacyl)glutathione + H2O = a 2-hydroxy carboxylate + glutathione + H(+). Its pathway is secondary metabolite metabolism; methylglyoxal degradation; (R)-lactate from methylglyoxal: step 2/2. Its function is as follows. Thiolesterase that catalyzes the hydrolysis of S-D-lactoyl-glutathione to form glutathione and D-lactic acid. The chain is Hydroxyacylglutathione hydrolase from Salmonella paratyphi C (strain RKS4594).